The primary structure comprises 612 residues: Elongation factor 4 (612 aa).

Residues 12–194 (SRIRNFSIIA…QIVEKVPAPS (183 aa)) enclose the tr-type G domain. Residues 24–29 (DHGKST) and 141–144 (NKID) contribute to the GTP site.

This sequence belongs to the TRAFAC class translation factor GTPase superfamily. Classic translation factor GTPase family. LepA subfamily.

The protein localises to the cell membrane. It catalyses the reaction GTP + H2O = GDP + phosphate + H(+). Required for accurate and efficient protein synthesis under certain stress conditions. May act as a fidelity factor of the translation reaction, by catalyzing a one-codon backward translocation of tRNAs on improperly translocated ribosomes. Back-translocation proceeds from a post-translocation (POST) complex to a pre-translocation (PRE) complex, thus giving elongation factor G a second chance to translocate the tRNAs correctly. Binds to ribosomes in a GTP-dependent manner. The protein is Elongation factor 4 of Bacillus licheniformis (strain ATCC 14580 / DSM 13 / JCM 2505 / CCUG 7422 / NBRC 12200 / NCIMB 9375 / NCTC 10341 / NRRL NRS-1264 / Gibson 46).